The primary structure comprises 100 residues: Urease subunit gamma (100 aa).

This sequence belongs to the urease gamma subunit family. In terms of assembly, heterotrimer of UreA (gamma), UreB (beta) and UreC (alpha) subunits. Three heterotrimers associate to form the active enzyme.

Its subcellular location is the cytoplasm. It carries out the reaction urea + 2 H2O + H(+) = hydrogencarbonate + 2 NH4(+). It functions in the pathway nitrogen metabolism; urea degradation; CO(2) and NH(3) from urea (urease route): step 1/1. The polypeptide is Urease subunit gamma (Lysinibacillus sphaericus (strain C3-41)).